Reading from the N-terminus, the 117-residue chain is Mini-circle uncharacterized 12.9 kDa protein (117 aa).

The sequence is that of Mini-circle uncharacterized 12.9 kDa protein from Streptomyces coelicolor (strain ATCC BAA-471 / A3(2) / M145).